A 98-amino-acid polypeptide reads, in one-letter code: Co-chaperonin GroES (98 aa).

Belongs to the GroES chaperonin family. Heptamer of 7 subunits arranged in a ring. Interacts with the chaperonin GroEL.

It localises to the cytoplasm. Functionally, together with the chaperonin GroEL, plays an essential role in assisting protein folding. The GroEL-GroES system forms a nano-cage that allows encapsulation of the non-native substrate proteins and provides a physical environment optimized to promote and accelerate protein folding. GroES binds to the apical surface of the GroEL ring, thereby capping the opening of the GroEL channel. The chain is Co-chaperonin GroES from Agrobacterium fabrum (strain C58 / ATCC 33970) (Agrobacterium tumefaciens (strain C58)).